We begin with the raw amino-acid sequence, 131 residues long: Cystatin J (131 aa).

An N-terminal signal peptide occupies residues 1-18 (MHLYLCVLVCLSIGMANC). Positions 35-109 (DEILLTGVEF…RMNLPTKCSF (75 aa)) constitute a Cystatin domain. The Secondary area of contact motif lies at 68–72 (QVVAG). Cystine bridges form between C86/C97 and C107/C128.

The protein belongs to the cystatin family.

The protein localises to the secreted. It localises to the nematocyst. This recombinant protein inhibits the C1 cysteine protease papain (Ki is below 0.5 nM). In Cyanea capillata (Lion's mane jellyfish), this protein is Cystatin J.